The following is a 376-amino-acid chain: Palmitoyltransferase PFA4 (376 aa).

Topologically, residues 1-11 (MPVKLKWPWLG) are cytoplasmic. Residues 12–32 (IAIPSFLIASIGYCAHYFILL) traverse the membrane as a helical segment. Over 33–40 (NFLSLRKQ) the chain is Lumenal. Residues 41–61 (LWYQFCQTMIWLSYYLAIYTP) traverse the membrane as a helical segment. At 62–122 (PGKPPTNFKP…NCVGYNNFPH (61 aa)) the chain is on the cytoplasmic side. Positions 78–128 (VYCKKCKCYKPERSHHCKTCNQCVLMMDHHCPWTMNCVGYNNFPHFIRFLF) constitute a DHHC domain. The active-site S-palmitoyl cysteine intermediate is Cys108. The chain crosses the membrane as a helical span at residues 123 to 143 (FIRFLFWVIVGTTSLAIFLTT). At 144-163 (RIHSIWVHRSSPSYLYYKSE) the chain is on the lumenal side. Residues 164–184 (LIFLTILTPLNAFILLTISIL) traverse the membrane as a helical segment. Residues 185-376 (MIRCLFNQIF…EDFGVDVDVE (192 aa)) are Cytoplasmic-facing.

Belongs to the DHHC palmitoyltransferase family. PFA4 subfamily.

It localises to the endoplasmic reticulum membrane. It catalyses the reaction L-cysteinyl-[protein] + hexadecanoyl-CoA = S-hexadecanoyl-L-cysteinyl-[protein] + CoA. Mediates the reversible addition of palmitate to target proteins, thereby regulating their membrane association and biological function. The polypeptide is Palmitoyltransferase PFA4 (Candida glabrata (strain ATCC 2001 / BCRC 20586 / JCM 3761 / NBRC 0622 / NRRL Y-65 / CBS 138) (Yeast)).